The chain runs to 151 residues: Endoribonuclease YbeY (151 aa).

The Zn(2+) site is built by His-108, His-112, and Asp-118.

It belongs to the endoribonuclease YbeY family. Zn(2+) serves as cofactor.

Its subcellular location is the cytoplasm. Its function is as follows. Single strand-specific metallo-endoribonuclease involved in late-stage 70S ribosome quality control and in maturation of the 3' terminus of the 16S rRNA. This chain is Endoribonuclease YbeY, found in Porphyromonas gingivalis (strain ATCC BAA-308 / W83).